We begin with the raw amino-acid sequence, 483 residues long: Rhamnulokinase (483 aa).

Residue 11–15 (ASSGR) coordinates ATP. Residues glycine 79 and 234 to 236 (HDT) each bind substrate. The active-site Proton acceptor is aspartate 235. An ATP-binding site is contributed by threonine 257. Asparagine 294 lines the substrate pocket. Glutamine 302 contacts ATP. Cysteine 352 and cysteine 369 are oxidised to a cystine. An ATP-binding site is contributed by glycine 401.

The protein belongs to the rhamnulokinase family. Mg(2+) serves as cofactor.

The enzyme catalyses L-rhamnulose + ATP = L-rhamnulose 1-phosphate + ADP + H(+). It participates in carbohydrate degradation; L-rhamnose degradation; glycerone phosphate from L-rhamnose: step 2/3. Functionally, involved in the catabolism of L-rhamnose (6-deoxy-L-mannose). Catalyzes the transfer of the gamma-phosphate group from ATP to the 1-hydroxyl group of L-rhamnulose to yield L-rhamnulose 1-phosphate. This is Rhamnulokinase from Listeria innocua serovar 6a (strain ATCC BAA-680 / CLIP 11262).